Consider the following 610-residue polypeptide: MLKIKALFSKKKPDQADLSQESKKPFKGKTRSSGTNNKDVSQITSSPKKSFQDKNIVQYPSVVADDHHMKSLTDELVTTIDSDSSPSDNITTENVETVTSVPAIDVHESSEGQLSSDPLISDESLSEQSEIISDIQDDSTDDDNMEDEIPEKSFLEQKELIGYKLINKIGEGAFSKVFRAIPAKNSSNEFLTKNYKAVAIKVIKKADLSSINGDHRKKDKGKDSTKTSSRDQVLKEVALHKTVSAGCSQIVAFIDFQETDSYYYIIQELLTGGEIFGEIVRLTYFSEDLSRHVIKQLALAVKHMHSLGVVHRDIKPENLLFEPIEFTRSIKPKLRKSDDPQTKADEGIFTPGVGGGGIGIVKLADFGLSKQIFSKNTKTPCGTVGYTAPEVVKDEHYSMKVDMWGIGCVLYTMLCGFPPFYDEKIDTLTEKISRGEYTFLKPWWDEISAGAKNAVAKLLELEPSKRYDIDQFLDDPWLNTFDCLPKEGESSQKKAGTSERRHPHKKQFQLFQRDSSLLFSPAAVAMRDAFDIGNAVKRTEEDRMGTRGGLGSLAEDEELEDSYSGAQGDEQLEQNMFQLTLDTSTILQRRKKVQENDVGPTIPISATIRE.

Disordered regions lie at residues 1 to 55 (MLKI…QDKN) and 99 to 127 (TSVPAIDVHESSEGQLSSDPLISDESLSE). Positions 11–24 (KKPDQADLSQESKK) are enriched in basic and acidic residues. Residues 31 to 55 (RSSGTNNKDVSQITSSPKKSFQDKN) are compositionally biased toward polar residues. 2 positions are modified to phosphoserine: serine 46 and serine 50. In terms of domain architecture, Protein kinase spans 163 to 478 (YKLINKIGEG…IDQFLDDPWL (316 aa)). 169–177 (IGEGAFSKV) contacts ATP. Serine 187 is modified (phosphoserine). Lysine 201 contacts ATP. Aspartate 313 (proton acceptor) is an active-site residue. At threonine 350 the chain carries Phosphothreonine. The segment at 493–506 (KKAGTSERRHPHKK) is calmodulin-binding. Residue serine 520 is modified to Phosphoserine. A disordered region spans residues 541–564 (EDRMGTRGGLGSLAEDEELEDSYS).

Belongs to the protein kinase superfamily. CAMK Ser/Thr protein kinase family. CaMK subfamily. In terms of processing, autophosphorylated. Phosphorylated by HOG1 at Ser-520 after osmotic stress.

The protein resides in the cytoplasm. It carries out the reaction L-seryl-[protein] + ATP = O-phospho-L-seryl-[protein] + ADP + H(+). The catalysed reaction is L-threonyl-[protein] + ATP = O-phospho-L-threonyl-[protein] + ADP + H(+). Its activity is regulated as follows. Activated by Ser-520 phosphorylation by HOG1. In terms of biological role, serine/threonine-protein kinase involved in a signal transduction pathway that is activated by changes in the osmolarity of the extracellular environment. This is Serine/threonine-protein kinase RCK2 (RCK2) from Saccharomyces cerevisiae (strain ATCC 204508 / S288c) (Baker's yeast).